Here is a 727-residue protein sequence, read N- to C-terminus: Protein EXECUTER 1, chloroplastic (727 aa).

4 disordered regions span residues 1-51, 65-102, 340-381, and 413-455; these read MAAA…SRLF, LAGA…AGSG, ISSS…LPSD, and DEDD…SGDE. A chloroplast-targeting transit peptide spans 1–83; the sequence is MAAAVSTAPR…PRRRVSSVVR (83 aa). 2 stretches are compositionally biased toward low complexity: residues 19–33 and 42–51; these read SSSC…ASMS and PSSGSGSRLF. Residues 413-441 show a composition bias toward acidic residues; that stretch reads DEDDENDNPEDEIESSEDIGDGDNVEEAE.

The protein localises to the plastid. The protein resides in the chloroplast. In terms of biological role, together with EX2, enables higher plants to perceive singlet oxygen as a stress signal in plastid that activates a genetically determined nuclear stress response program which triggers a programmed cell death (PCD). This transfer of singlet oxygen-induced stress-related signals from the plastid to the nucleus that triggers genetically controlled PCD pathway is unique to photosynthetic eukaryotes and operates under mild stress conditions, impeding photosystem II (PSII) without causing photooxidative damage of the plant. This is Protein EXECUTER 1, chloroplastic from Oryza sativa subsp. japonica (Rice).